Consider the following 261-residue polypeptide: Putative ankyrin repeat protein L99 (261 aa).

ANK repeat units lie at residues 21-50 (KVNP…DVHA), 51-80 (HEDY…NIHS), 81-110 (DRDL…NVNA), 112-140 (QNSA…NIHA), 142-170 (NNFC…DINA), 171-203 (DNGA…IDNC), and 231-259 (NELK…NINS).

In Acanthamoeba polyphaga (Amoeba), this protein is Putative ankyrin repeat protein L99.